Here is a 516-residue protein sequence, read N- to C-terminus: RxLR effector protein PITG_15127 (516 aa).

The signal sequence occupies residues 1-22; sequence MRLYSGAILCTIATLLISVSTA. Positions 48 to 63 match the RxLR-dEER motif; sequence RFLRVSTQNTENGENR.

Belongs to the RxLR effector family.

Its subcellular location is the secreted. It localises to the host cell membrane. The protein resides in the host nucleus. The protein localises to the host cytoplasm. In terms of biological role, effector that enhances P.infestans colonization of Nicotiana benthamiana leaves. This is RxLR effector protein PITG_15127 from Phytophthora infestans (strain T30-4) (Potato late blight agent).